Consider the following 392-residue polypeptide: Dual-specificity RNA methyltransferase RlmN (392 aa).

Glu115 functions as the Proton acceptor in the catalytic mechanism. Residues 121–358 (EVDRGTLCIS…YKAGYASPIR (238 aa)) form the Radical SAM core domain. Cys128 and Cys369 are joined by a disulfide. [4Fe-4S] cluster is bound by residues Cys135, Cys139, and Cys142. Residues 195–196 (GE), Ser227, 249–251 (SFH), and Asn326 each bind S-adenosyl-L-methionine. Catalysis depends on Cys369, which acts as the S-methylcysteine intermediate.

Belongs to the radical SAM superfamily. RlmN family. [4Fe-4S] cluster serves as cofactor.

It is found in the cytoplasm. It carries out the reaction adenosine(2503) in 23S rRNA + 2 reduced [2Fe-2S]-[ferredoxin] + 2 S-adenosyl-L-methionine = 2-methyladenosine(2503) in 23S rRNA + 5'-deoxyadenosine + L-methionine + 2 oxidized [2Fe-2S]-[ferredoxin] + S-adenosyl-L-homocysteine. It catalyses the reaction adenosine(37) in tRNA + 2 reduced [2Fe-2S]-[ferredoxin] + 2 S-adenosyl-L-methionine = 2-methyladenosine(37) in tRNA + 5'-deoxyadenosine + L-methionine + 2 oxidized [2Fe-2S]-[ferredoxin] + S-adenosyl-L-homocysteine. Specifically methylates position 2 of adenine 2503 in 23S rRNA and position 2 of adenine 37 in tRNAs. m2A2503 modification seems to play a crucial role in the proofreading step occurring at the peptidyl transferase center and thus would serve to optimize ribosomal fidelity. In Jannaschia sp. (strain CCS1), this protein is Dual-specificity RNA methyltransferase RlmN.